The sequence spans 142 residues: Large ribosomal subunit protein uL11 (142 aa).

Belongs to the universal ribosomal protein uL11 family. Part of the ribosomal stalk of the 50S ribosomal subunit. Interacts with L10 and the large rRNA to form the base of the stalk. L10 forms an elongated spine to which L12 dimers bind in a sequential fashion forming a multimeric L10(L12)X complex. Post-translationally, one or more lysine residues are methylated.

In terms of biological role, forms part of the ribosomal stalk which helps the ribosome interact with GTP-bound translation factors. The polypeptide is Large ribosomal subunit protein uL11 (Pseudoalteromonas atlantica (strain T6c / ATCC BAA-1087)).